The sequence spans 330 residues: Ferredoxin--NADP reductase 2 (330 aa).

Glu-37, Gln-45, Tyr-50, Val-90, Phe-124, Asp-286, and Thr-327 together coordinate FAD.

The protein belongs to the ferredoxin--NADP reductase type 2 family. Homodimer. Requires FAD as cofactor.

It catalyses the reaction 2 reduced [2Fe-2S]-[ferredoxin] + NADP(+) + H(+) = 2 oxidized [2Fe-2S]-[ferredoxin] + NADPH. The polypeptide is Ferredoxin--NADP reductase 2 (Shouchella clausii (strain KSM-K16) (Alkalihalobacillus clausii)).